The chain runs to 277 residues: Coiled-coil domain-containing protein 117 (277 aa).

The interval 1–69 is disordered; sequence MAALGRPFSG…GRVSIHCRKK (69 aa). Positions 26–37 are enriched in low complexity; sequence FAGRAFPPGAAG. Arg47 carries the post-translational modification Omega-N-methylarginine. Ser52 is modified (phosphoserine). Over residues 58–69 the composition is skewed to basic residues; sequence ARGRVSIHCRKK. Residues 139–166 adopt a coiled-coil conformation; that stretch reads QCEVARRRLQEIEDRIIDEDEEVESDRN. Residues 212-277 form a disordered region; it reads LPELLPEKPK…ATSTEEEMEL (66 aa).

As to quaternary structure, interacts with CIAO2B; the interaction is direct. Interacts with MMS19; the interaction is indirect.

It is found in the cytoplasm. The protein resides in the cytoskeleton. It localises to the spindle. The protein localises to the nucleus. Facilitates DNA repair, cell cycle progression, and cell proliferation through its interaction with CIAO2B. The chain is Coiled-coil domain-containing protein 117 from Mus musculus (Mouse).